Consider the following 293-residue polypeptide: 33 kDa chaperonin (293 aa).

Cystine bridges form between Cys-237–Cys-239 and Cys-271–Cys-274.

Belongs to the HSP33 family. In terms of processing, under oxidizing conditions two disulfide bonds are formed involving the reactive cysteines. Under reducing conditions zinc is bound to the reactive cysteines and the protein is inactive.

It is found in the cytoplasm. Functionally, redox regulated molecular chaperone. Protects both thermally unfolding and oxidatively damaged proteins from irreversible aggregation. Plays an important role in the bacterial defense system toward oxidative stress. The polypeptide is 33 kDa chaperonin (Haemophilus influenzae (strain ATCC 51907 / DSM 11121 / KW20 / Rd)).